Reading from the N-terminus, the 231-residue chain is Probable transglycosylase SceD (231 aa).

Positions 1 to 27 (MKKTLLASSLAVGLGIVAGNAGHEAHA) are cleaved as a signal peptide. A compositionally biased stretch (polar residues) spans 93–116 (SAQAPATNNVEPSAVQANQVQSQE). The segment at 93–152 (SAQAPATNNVEPSAVQANQVQSQEVEAPQNAQTQQPQASTSNNSQVTATPTESKASEGSS) is disordered. Positions 119-137 (APQNAQTQQPQASTSNNSQ) are enriched in low complexity. Positions 138–152 (VTATPTESKASEGSS) are enriched in polar residues.

This sequence belongs to the transglycosylase family. SceD subfamily.

The protein localises to the secreted. Is able to cleave peptidoglycan and affects clumping and separation of bacterial cells. This chain is Probable transglycosylase SceD (sceD), found in Staphylococcus aureus (strain Mu3 / ATCC 700698).